Reading from the N-terminus, the 381-residue chain is tRNA (guanine(26)-N(2))-dimethyltransferase (381 aa).

The Trm1 methyltransferase domain maps to 6 to 378 (FEVHEGKAKV…APYEVFVEVM (373 aa)). S-adenosyl-L-methionine contacts are provided by Arg38, Arg63, Asp80, Asp122, and Ala123.

Belongs to the class I-like SAM-binding methyltransferase superfamily. Trm1 family. Monomer.

The catalysed reaction is guanosine(26) in tRNA + 2 S-adenosyl-L-methionine = N(2)-dimethylguanosine(26) in tRNA + 2 S-adenosyl-L-homocysteine + 2 H(+). In terms of biological role, dimethylates a single guanine residue at position 26 of a number of tRNAs using S-adenosyl-L-methionine as donor of the methyl groups. This Pyrococcus furiosus (strain ATCC 43587 / DSM 3638 / JCM 8422 / Vc1) protein is tRNA (guanine(26)-N(2))-dimethyltransferase.